Here is a 308-residue protein sequence, read N- to C-terminus: N-acetylmuramic acid 6-phosphate etherase (308 aa).

Residues 62–225 enclose the SIS domain; the sequence is ITDAFKVGGR…TTASMIRLGK (164 aa). Catalysis depends on Glu-90, which acts as the Proton donor. Glu-121 is a catalytic residue.

Belongs to the GCKR-like family. MurNAc-6-P etherase subfamily. Homodimer.

It catalyses the reaction N-acetyl-D-muramate 6-phosphate + H2O = N-acetyl-D-glucosamine 6-phosphate + (R)-lactate. The protein operates within amino-sugar metabolism; 1,6-anhydro-N-acetylmuramate degradation. It functions in the pathway amino-sugar metabolism; N-acetylmuramate degradation. Its pathway is cell wall biogenesis; peptidoglycan recycling. Its function is as follows. Specifically catalyzes the cleavage of the D-lactyl ether substituent of MurNAc 6-phosphate, producing GlcNAc 6-phosphate and D-lactate. Together with AnmK, is also required for the utilization of anhydro-N-acetylmuramic acid (anhMurNAc) either imported from the medium or derived from its own cell wall murein, and thus plays a role in cell wall recycling. In Vibrio campbellii (strain ATCC BAA-1116), this protein is N-acetylmuramic acid 6-phosphate etherase.